A 396-amino-acid chain; its full sequence is Elongation factor Tu (396 aa).

The region spanning 11 to 205 (KPHVNIGTIG…TVDEYIPTPE (195 aa)) is the tr-type G domain. Residues 20–27 (GHVDHGKT) form a G1 region. 20–27 (GHVDHGKT) contacts GTP. A Mg(2+)-binding site is contributed by Thr27. Residues 61 to 65 (GITIN) form a G2 region. Residues 82 to 85 (DAPG) are G3. GTP contacts are provided by residues 82–86 (DAPGH) and 137–140 (NKVD). Positions 137-140 (NKVD) are G4. Residues 175–177 (SAL) are G5.

The protein belongs to the TRAFAC class translation factor GTPase superfamily. Classic translation factor GTPase family. EF-Tu/EF-1A subfamily. Monomer.

The protein resides in the cytoplasm. The catalysed reaction is GTP + H2O = GDP + phosphate + H(+). Functionally, GTP hydrolase that promotes the GTP-dependent binding of aminoacyl-tRNA to the A-site of ribosomes during protein biosynthesis. This chain is Elongation factor Tu, found in Lactobacillus gasseri (strain ATCC 33323 / DSM 20243 / BCRC 14619 / CIP 102991 / JCM 1131 / KCTC 3163 / NCIMB 11718 / NCTC 13722 / AM63).